Here is a 1232-residue protein sequence, read N- to C-terminus: DNA-directed RNA polymerase subunit beta (1232 aa).

A disordered region spans residues 1170 to 1232 (SVDEDADELE…LDLDDFGDEH (63 aa)). The segment covering 1171-1180 (VDEDADELEV) has biased composition (acidic residues). Residues 1189 to 1198 (PEEKEEKEKE) are compositionally biased toward basic and acidic residues. The span at 1199 to 1232 (DSDEYDDLREEDVEPDLEELSLDDLDLDDFGDEH) shows a compositional bias: acidic residues.

This sequence belongs to the RNA polymerase beta chain family. The RNAP catalytic core consists of 2 alpha, 1 beta, 1 beta' and 1 omega subunit. When a sigma factor is associated with the core the holoenzyme is formed, which can initiate transcription.

It catalyses the reaction RNA(n) + a ribonucleoside 5'-triphosphate = RNA(n+1) + diphosphate. Functionally, DNA-dependent RNA polymerase catalyzes the transcription of DNA into RNA using the four ribonucleoside triphosphates as substrates. This Clostridium botulinum (strain Kyoto / Type A2) protein is DNA-directed RNA polymerase subunit beta.